Consider the following 452-residue polypeptide: Down-regulator of invasive growth 1 (452 aa).

Disordered regions lie at residues 1 to 145 and 262 to 311; these read MAVS…SAPA and RNKR…ADLR. 2 stretches are compositionally biased toward polar residues: residues 12–22 and 35–53; these read EDTSIAKSTQD and KGSS…SVGQ. At Ser45 the chain carries Phosphoserine. A compositionally biased stretch (acidic residues) spans 61-77; sequence PEEDDSGDKEADHEDSE. The segment covering 81-100 has biased composition (basic residues); sequence AKKRKAQPLKNPKKSLKRGR. 4 stretches are compositionally biased toward polar residues: residues 107–116, 124–145, 269–281, and 291–307; these read LSDSNTNTHG, LASS…SAPA, SYDS…ASTG, and RNSS…TQQR. Ser126, Ser142, Ser272, and Ser275 each carry phosphoserine. An interaction with FUS3 and KSS1 region spans residues 212–452; sequence IPPPHMLNKP…KSSSHHRTGK (241 aa). The residue at position 330 (Ser330) is a Phosphoserine. Residues 331–348 show a composition bias toward low complexity; the sequence is ANTKARSASTSTSTSTST. The tract at residues 331–395 is disordered; it reads ANTKARSAST…QRTSQPQQQS (65 aa). Positions 349–361 are enriched in basic and acidic residues; sequence NRDRSSWHEAEPN. Residues 362–372 are compositionally biased toward acidic residues; sequence KDEEEGTDLAI. Residues 378 to 395 are compositionally biased toward low complexity; sequence PTPTFTTFQRTSQPQQQS. A Phosphothreonine modification is found at Thr379. Phosphoserine is present on residues Ser395 and Ser428.

In terms of assembly, forms a complex with DIG2, STE12 and either FUS3 or KSS1. The interaction of FUS3 with STE12 depends on the presence of both DIG1 and DIG2. STE12 is lost from FUS3/DIG1/DIG2 complex after pheromone treatment. DIG1 and DIG2 have also been reported to interact with CLN1 and CLN2. Post-translationally, phosphorylated by FUS3 and KSS1, in a pheromone-stimulated manner. Phosphorylation reduces the affinity for STE12.

It is found in the nucleus. Functionally, DIG1 and DIG2 are negative regulators of the filamentation and pheromone induced mating program. DIG1 and DIG2 inhibit the transcriptional activity of STE12 by direct protein-protein interaction. DIG1 colocalizes to promoters with STE12 and redistributes with it during induction of filamentation (by butanol) or mating (by pheromone) to program specific genes, but binding of DIG1 to STE12 is reduced by pheromone treatment. In Saccharomyces cerevisiae (strain ATCC 204508 / S288c) (Baker's yeast), this protein is Down-regulator of invasive growth 1 (DIG1).